Reading from the N-terminus, the 159-residue chain is Sec-independent protein translocase protein TatB (159 aa).

A helical membrane pass occupies residues 1–21; it reads MIDIGLSKMALIGAVALIVIG.

It belongs to the TatB family. The Tat system comprises two distinct complexes: a TatABC complex, containing multiple copies of TatA, TatB and TatC subunits, and a separate TatA complex, containing only TatA subunits. Substrates initially bind to the TatABC complex, which probably triggers association of the separate TatA complex to form the active translocon.

The protein resides in the cell inner membrane. In terms of biological role, part of the twin-arginine translocation (Tat) system that transports large folded proteins containing a characteristic twin-arginine motif in their signal peptide across membranes. Together with TatC, TatB is part of a receptor directly interacting with Tat signal peptides. TatB may form an oligomeric binding site that transiently accommodates folded Tat precursor proteins before their translocation. The protein is Sec-independent protein translocase protein TatB of Acidovorax sp. (strain JS42).